Consider the following 190-residue polypeptide: Threonylcarbamoyl-AMP synthase (190 aa).

A YrdC-like domain is found at Gly-7–Gly-190.

This sequence belongs to the SUA5 family. TsaC subfamily.

Its subcellular location is the cytoplasm. The enzyme catalyses L-threonine + hydrogencarbonate + ATP = L-threonylcarbamoyladenylate + diphosphate + H2O. Functionally, required for the formation of a threonylcarbamoyl group on adenosine at position 37 (t(6)A37) in tRNAs that read codons beginning with adenine. Catalyzes the conversion of L-threonine, HCO(3)(-)/CO(2) and ATP to give threonylcarbamoyl-AMP (TC-AMP) as the acyladenylate intermediate, with the release of diphosphate. This chain is Threonylcarbamoyl-AMP synthase, found in Shigella flexneri.